The primary structure comprises 451 residues: Putative gluconeogenesis factor (451 aa).

It belongs to the gluconeogenesis factor family.

Its subcellular location is the cytoplasm. Functionally, required for morphogenesis under gluconeogenic growth conditions. The polypeptide is Putative gluconeogenesis factor (Clostridium acetobutylicum (strain ATCC 824 / DSM 792 / JCM 1419 / IAM 19013 / LMG 5710 / NBRC 13948 / NRRL B-527 / VKM B-1787 / 2291 / W)).